The chain runs to 1262 residues: Tau-tubulin kinase homolog Asator (1262 aa).

The tract at residues 13 to 35 (NASAPDDGNQSCQPSSKQDQYLS) is disordered. Residues 20–35 (GNQSCQPSSKQDQYLS) show a composition bias toward polar residues. The region spanning 173-436 (WKVVRKIGGG…MLIGLFERCM (264 aa)) is the Protein kinase domain. ATP-binding positions include 179–187 (IGGGGFGEI) and Lys202. Residue Asp293 is the Proton acceptor of the active site. Disordered stretches follow at residues 662–724 (TVTN…TSNA), 755–792 (RSAT…ARSS), and 984–1003 (KDSA…SRHR). The segment covering 667–679 (KTSEVNRSTEEQK) has biased composition (basic and acidic residues). Positions 755–776 (RSATSTNLRPSSSASQRINSGS) are enriched in polar residues.

This sequence belongs to the protein kinase superfamily. CK1 Ser/Thr protein kinase family. Interacts with Mgtor. It depends on Mg(2+) as a cofactor. In terms of tissue distribution, detected in larval brain.

It localises to the cytoplasm. It is found in the cytoskeleton. Its subcellular location is the spindle. The enzyme catalyses L-seryl-[protein] + ATP = O-phospho-L-seryl-[protein] + ADP + H(+). It catalyses the reaction L-threonyl-[protein] + ATP = O-phospho-L-threonyl-[protein] + ADP + H(+). Its function is as follows. Probable serine/threonine protein kinase. The sequence is that of Tau-tubulin kinase homolog Asator from Drosophila melanogaster (Fruit fly).